The primary structure comprises 278 residues: 3-methyl-2-oxobutanoate hydroxymethyltransferase (278 aa).

2 residues coordinate Mg(2+): D43 and D82. 3-methyl-2-oxobutanoate-binding positions include 43 to 44 (DS), D82, and K112. E114 is a binding site for Mg(2+). E181 serves as the catalytic Proton acceptor.

This sequence belongs to the PanB family. In terms of assembly, homodecamer; pentamer of dimers. Mg(2+) is required as a cofactor.

It is found in the cytoplasm. The catalysed reaction is 3-methyl-2-oxobutanoate + (6R)-5,10-methylene-5,6,7,8-tetrahydrofolate + H2O = 2-dehydropantoate + (6S)-5,6,7,8-tetrahydrofolate. It functions in the pathway cofactor biosynthesis; (R)-pantothenate biosynthesis; (R)-pantoate from 3-methyl-2-oxobutanoate: step 1/2. In terms of biological role, catalyzes the reversible reaction in which hydroxymethyl group from 5,10-methylenetetrahydrofolate is transferred onto alpha-ketoisovalerate to form ketopantoate. In Bacillus cereus (strain B4264), this protein is 3-methyl-2-oxobutanoate hydroxymethyltransferase.